We begin with the raw amino-acid sequence, 418 residues long: Serine hydroxymethyltransferase (418 aa).

(6S)-5,6,7,8-tetrahydrofolate is bound by residues Leu121 and 125 to 127 (GHL). Lys230 bears the N6-(pyridoxal phosphate)lysine mark. (6S)-5,6,7,8-tetrahydrofolate contacts are provided by residues Glu246 and 355–357 (SPF).

The protein belongs to the SHMT family. Homodimer. It depends on pyridoxal 5'-phosphate as a cofactor.

The protein resides in the cytoplasm. It carries out the reaction (6R)-5,10-methylene-5,6,7,8-tetrahydrofolate + glycine + H2O = (6S)-5,6,7,8-tetrahydrofolate + L-serine. The protein operates within one-carbon metabolism; tetrahydrofolate interconversion. Its pathway is amino-acid biosynthesis; glycine biosynthesis; glycine from L-serine: step 1/1. In terms of biological role, catalyzes the reversible interconversion of serine and glycine with tetrahydrofolate (THF) serving as the one-carbon carrier. This reaction serves as the major source of one-carbon groups required for the biosynthesis of purines, thymidylate, methionine, and other important biomolecules. Also exhibits THF-independent aldolase activity toward beta-hydroxyamino acids, producing glycine and aldehydes, via a retro-aldol mechanism. The polypeptide is Serine hydroxymethyltransferase (Streptococcus pneumoniae serotype 2 (strain D39 / NCTC 7466)).